We begin with the raw amino-acid sequence, 334 residues long: uncharacterized protein (334 aa).

It belongs to the Gfo/Idh/MocA family.

This is an uncharacterized protein from Rhizobium meliloti (Ensifer meliloti).